The primary structure comprises 35 residues: Toxin Ado1 (35 aa).

Cystine bridges form between Cys5–Cys20, Cys12–Cys25, and Cys19–Cys32.

It localises to the secreted. Binds reversibly and blocks P/Q-type voltage-gated calcium channels (Cav). This chain is Toxin Ado1, found in Agriosphodrus dohrni (Japanese assassin-bug).